Reading from the N-terminus, the 179-residue chain is ATP synthase subunit delta (179 aa).

The protein belongs to the ATPase delta chain family. F-type ATPases have 2 components, F(1) - the catalytic core - and F(0) - the membrane proton channel. F(1) has five subunits: alpha(3), beta(3), gamma(1), delta(1), epsilon(1). F(0) has three main subunits: a(1), b(2) and c(10-14). The alpha and beta chains form an alternating ring which encloses part of the gamma chain. F(1) is attached to F(0) by a central stalk formed by the gamma and epsilon chains, while a peripheral stalk is formed by the delta and b chains.

It is found in the cell inner membrane. F(1)F(0) ATP synthase produces ATP from ADP in the presence of a proton or sodium gradient. F-type ATPases consist of two structural domains, F(1) containing the extramembraneous catalytic core and F(0) containing the membrane proton channel, linked together by a central stalk and a peripheral stalk. During catalysis, ATP synthesis in the catalytic domain of F(1) is coupled via a rotary mechanism of the central stalk subunits to proton translocation. In terms of biological role, this protein is part of the stalk that links CF(0) to CF(1). It either transmits conformational changes from CF(0) to CF(1) or is implicated in proton conduction. The protein is ATP synthase subunit delta of Delftia acidovorans (strain DSM 14801 / SPH-1).